Here is a 262-residue protein sequence, read N- to C-terminus: Proline-rich protein 23C (262 aa).

Disordered stretches follow at residues 1–52 (MGSR…AGTP) and 225–262 (VPSS…LFQE). Residues 226–242 (PSSPLQPLPPSPSPGPH) show a composition bias toward pro residues. The segment covering 243–252 (ARPELPERPP) has biased composition (basic and acidic residues). Positions 253-262 (CKVRRRLFQE) are enriched in basic residues.

It belongs to the PRR23 family.

This chain is Proline-rich protein 23C (PRR23C), found in Homo sapiens (Human).